The sequence spans 193 residues: AP-3 complex subunit sigma-2 (193 aa).

Belongs to the adaptor complexes small subunit family. Adaptor protein complex 3 (AP-3) is a heterotetramer composed of two large adaptins (delta-type subunit AP3D1 and beta-type subunit AP3B1 or AP3B2), a medium adaptin (mu-type subunit AP3M1 or AP3M2) and a small adaptin (sigma-type subunit APS1 or AP3S2). Interacts with AGAP1. AP-3 associates with the BLOC-1 complex. In terms of tissue distribution, present in all adult tissues examined.

It is found in the golgi apparatus. The protein localises to the cytoplasmic vesicle membrane. Functionally, part of the AP-3 complex, an adaptor-related complex which is not clathrin-associated. The complex is associated with the Golgi region as well as more peripheral structures. It facilitates the budding of vesicles from the Golgi membrane and may be directly involved in trafficking to lysosomes. In concert with the BLOC-1 complex, AP-3 is required to target cargos into vesicles assembled at cell bodies for delivery into neurites and nerve terminals. The chain is AP-3 complex subunit sigma-2 (AP3S2) from Homo sapiens (Human).